The chain runs to 184 residues: 1,6-anhydro-N-acetylmuramyl-L-alanine amidase AmpD (184 aa).

Residues 30-171 (QDISLLVIHY…ISPKRKIDPG (142 aa)) form the N-acetylmuramoyl-L-alanine amidase domain. H38 is a binding site for Zn(2+). The active-site Proton acceptor is E120. Zn(2+)-binding residues include H159 and D169.

Belongs to the N-acetylmuramoyl-L-alanine amidase 2 family. Zn(2+) is required as a cofactor.

The protein resides in the cytoplasm. The enzyme catalyses Hydrolyzes the link between N-acetylmuramoyl residues and L-amino acid residues in certain cell-wall glycopeptides.. Involved in cell wall peptidoglycan recycling. Specifically cleaves the amide bond between the lactyl group of N-acetylmuramic acid and the alpha-amino group of the L-alanine in degradation products containing an anhydro N-acetylmuramyl moiety. This chain is 1,6-anhydro-N-acetylmuramyl-L-alanine amidase AmpD (ampD), found in Haemophilus influenzae (strain ATCC 51907 / DSM 11121 / KW20 / Rd).